The sequence spans 223 residues: UPF0758 protein HD_0732 (223 aa).

An MPN domain is found at 98-220 (TINTPHLAIM…YFSFEEERFH (123 aa)). His-169, His-171, and Asp-182 together coordinate Zn(2+). The JAMM motif motif lies at 169–182 (HNHPSGNCTASQAD).

The protein belongs to the UPF0758 family.

The polypeptide is UPF0758 protein HD_0732 (Haemophilus ducreyi (strain 35000HP / ATCC 700724)).